Consider the following 117-residue polypeptide: Nascent polypeptide-associated complex protein (117 aa).

The NAC-A/B domain maps to proline 9–valine 77.

The protein belongs to the NAC-alpha family. As to quaternary structure, homodimer. Interacts with the ribosome. Binds ribosomal RNA.

In terms of biological role, contacts the emerging nascent chain on the ribosome. The protein is Nascent polypeptide-associated complex protein of Methanothermobacter marburgensis (strain ATCC BAA-927 / DSM 2133 / JCM 14651 / NBRC 100331 / OCM 82 / Marburg) (Methanobacterium thermoautotrophicum).